The sequence spans 186 residues: ATP synthase subunit delta (186 aa).

Belongs to the ATPase delta chain family. In terms of assembly, F-type ATPases have 2 components, F(1) - the catalytic core - and F(0) - the membrane proton channel. F(1) has five subunits: alpha(3), beta(3), gamma(1), delta(1), epsilon(1). CF(0) has four main subunits: a(1), b(1), b'(1) and c(10-14). The alpha and beta chains form an alternating ring which encloses part of the gamma chain. F(1) is attached to F(0) by a central stalk formed by the gamma and epsilon chains, while a peripheral stalk is formed by the delta, b and b' chains.

The protein resides in the cell inner membrane. F(1)F(0) ATP synthase produces ATP from ADP in the presence of a proton or sodium gradient. F-type ATPases consist of two structural domains, F(1) containing the extramembraneous catalytic core and F(0) containing the membrane proton channel, linked together by a central stalk and a peripheral stalk. During catalysis, ATP synthesis in the catalytic domain of F(1) is coupled via a rotary mechanism of the central stalk subunits to proton translocation. Functionally, this protein is part of the stalk that links CF(0) to CF(1). It either transmits conformational changes from CF(0) to CF(1) or is implicated in proton conduction. The protein is ATP synthase subunit delta of Cereibacter sphaeroides (strain ATCC 17025 / ATH 2.4.3) (Rhodobacter sphaeroides).